The chain runs to 212 residues: Pyridoxine/pyridoxamine 5'-phosphate oxidase (212 aa).

Substrate is bound by residues 7-10 (RREY) and K66. FMN contacts are provided by residues 61-66 (RIVLLK), 76-77 (YT), R82, K83, and Q105. Residues Y123, R127, and S131 each coordinate substrate. FMN is bound by residues 140–141 (QS) and W185. Residue 191–193 (RLH) participates in substrate binding. R195 provides a ligand contact to FMN.

This sequence belongs to the pyridoxamine 5'-phosphate oxidase family. As to quaternary structure, homodimer. It depends on FMN as a cofactor.

The catalysed reaction is pyridoxamine 5'-phosphate + O2 + H2O = pyridoxal 5'-phosphate + H2O2 + NH4(+). It carries out the reaction pyridoxine 5'-phosphate + O2 = pyridoxal 5'-phosphate + H2O2. It functions in the pathway cofactor metabolism; pyridoxal 5'-phosphate salvage; pyridoxal 5'-phosphate from pyridoxamine 5'-phosphate: step 1/1. It participates in cofactor metabolism; pyridoxal 5'-phosphate salvage; pyridoxal 5'-phosphate from pyridoxine 5'-phosphate: step 1/1. Functionally, catalyzes the oxidation of either pyridoxine 5'-phosphate (PNP) or pyridoxamine 5'-phosphate (PMP) into pyridoxal 5'-phosphate (PLP). The polypeptide is Pyridoxine/pyridoxamine 5'-phosphate oxidase (Hahella chejuensis (strain KCTC 2396)).